A 343-amino-acid chain; its full sequence is Probable dual-specificity RNA methyltransferase RlmN (343 aa).

Catalysis depends on glutamate 90, which acts as the Proton acceptor. A Radical SAM core domain is found at 96-325 (HEGYATACIS…AEIRYEKGAD (230 aa)). Cysteine 103 and cysteine 330 are oxidised to a cystine. Residues cysteine 110, cysteine 114, and cysteine 117 each contribute to the [4Fe-4S] cluster site. S-adenosyl-L-methionine contacts are provided by residues 157–158 (GE), serine 189, 212–214 (SLH), and asparagine 288. The active-site S-methylcysteine intermediate is the cysteine 330.

Belongs to the radical SAM superfamily. RlmN family. It depends on [4Fe-4S] cluster as a cofactor.

The protein localises to the cytoplasm. The catalysed reaction is adenosine(2503) in 23S rRNA + 2 reduced [2Fe-2S]-[ferredoxin] + 2 S-adenosyl-L-methionine = 2-methyladenosine(2503) in 23S rRNA + 5'-deoxyadenosine + L-methionine + 2 oxidized [2Fe-2S]-[ferredoxin] + S-adenosyl-L-homocysteine. It catalyses the reaction adenosine(37) in tRNA + 2 reduced [2Fe-2S]-[ferredoxin] + 2 S-adenosyl-L-methionine = 2-methyladenosine(37) in tRNA + 5'-deoxyadenosine + L-methionine + 2 oxidized [2Fe-2S]-[ferredoxin] + S-adenosyl-L-homocysteine. Its function is as follows. Specifically methylates position 2 of adenine 2503 in 23S rRNA and position 2 of adenine 37 in tRNAs. This is Probable dual-specificity RNA methyltransferase RlmN from Pseudothermotoga lettingae (strain ATCC BAA-301 / DSM 14385 / NBRC 107922 / TMO) (Thermotoga lettingae).